A 213-amino-acid polypeptide reads, in one-letter code: Uridine kinase (213 aa).

Residue 14–21 (GASASGKS) coordinates ATP.

This sequence belongs to the uridine kinase family.

Its subcellular location is the cytoplasm. It catalyses the reaction uridine + ATP = UMP + ADP + H(+). It carries out the reaction cytidine + ATP = CMP + ADP + H(+). Its pathway is pyrimidine metabolism; CTP biosynthesis via salvage pathway; CTP from cytidine: step 1/3. The protein operates within pyrimidine metabolism; UMP biosynthesis via salvage pathway; UMP from uridine: step 1/1. This chain is Uridine kinase, found in Vibrio parahaemolyticus serotype O3:K6 (strain RIMD 2210633).